Here is a 410-residue protein sequence, read N- to C-terminus: Protein trichome birefringence-like 34 (410 aa).

A helical; Signal-anchor for type II membrane protein transmembrane segment spans residues 13-33; it reads TSFHTIAAVLVAGLIFTAVFL. The GDS motif motif lies at 133–135; that stretch reads GDS. The DCXHWCLPGXXDXWN motif motif lies at 383 to 397; sequence DCIHWCLPGVPDVWN.

It belongs to the PC-esterase family. TBL subfamily.

The protein resides in the golgi apparatus membrane. May act as a bridging protein that binds pectin and other cell wall polysaccharides. Probably involved in maintaining esterification of pectins. May be involved in the specific O-acetylation of cell wall polymers. The protein is Protein trichome birefringence-like 34 (TBL34) of Arabidopsis thaliana (Mouse-ear cress).